The chain runs to 239 residues: Demethylmenaquinone methyltransferase (239 aa).

Residues Thr-68, Asp-86, and 111–112 (NG) contribute to the S-adenosyl-L-methionine site.

It belongs to the class I-like SAM-binding methyltransferase superfamily. MenG/UbiE family.

It catalyses the reaction a 2-demethylmenaquinol + S-adenosyl-L-methionine = a menaquinol + S-adenosyl-L-homocysteine + H(+). The protein operates within quinol/quinone metabolism; menaquinone biosynthesis; menaquinol from 1,4-dihydroxy-2-naphthoate: step 2/2. Functionally, methyltransferase required for the conversion of demethylmenaquinol (DMKH2) to menaquinol (MKH2). The sequence is that of Demethylmenaquinone methyltransferase from Tropheryma whipplei (strain TW08/27) (Whipple's bacillus).